The following is a 165-amino-acid chain: Lipoprotein signal peptidase (165 aa).

3 consecutive transmembrane segments (helical) span residues 9–29 (SFLW…YFVV), 65–85 (WQKY…CYFL), and 100–120 (ALII…GFVV). Catalysis depends on residues aspartate 121 and aspartate 139. The chain crosses the membrane as a helical span at residues 134 to 154 (VFNVADIAISLGAGLMILDAF).

It belongs to the peptidase A8 family.

The protein resides in the cell inner membrane. It carries out the reaction Release of signal peptides from bacterial membrane prolipoproteins. Hydrolyzes -Xaa-Yaa-Zaa-|-(S,diacylglyceryl)Cys-, in which Xaa is hydrophobic (preferably Leu), and Yaa (Ala or Ser) and Zaa (Gly or Ala) have small, neutral side chains.. It participates in protein modification; lipoprotein biosynthesis (signal peptide cleavage). In terms of biological role, this protein specifically catalyzes the removal of signal peptides from prolipoproteins. The chain is Lipoprotein signal peptidase from Pasteurella multocida (strain Pm70).